Consider the following 422-residue polypeptide: Histidine--tRNA ligase (422 aa).

The protein belongs to the class-II aminoacyl-tRNA synthetase family. In terms of assembly, homodimer.

Its subcellular location is the cytoplasm. The enzyme catalyses tRNA(His) + L-histidine + ATP = L-histidyl-tRNA(His) + AMP + diphosphate + H(+). This Prosthecochloris aestuarii (strain DSM 271 / SK 413) protein is Histidine--tRNA ligase.